Here is a 409-residue protein sequence, read N- to C-terminus: Coagulation factor IX (409 aa).

Tyrosine 1, asparagine 2, glutamate 7, glutamate 8, glutamate 16, glutamate 18, glutamate 21, glutamate 22, glutamate 27, glutamate 28, and glutamate 31 together coordinate Ca(2+). One can recognise a Gla domain in the interval 1 to 47; that stretch reads YNSGKLEESFVRGNLERECIEEKCSFEEAREVFENTEKTNEFWKQYV. A 4-carboxyglutamate mark is found at glutamate 7, glutamate 8, glutamate 16, glutamate 18, glutamate 21, glutamate 22, glutamate 27, glutamate 28, glutamate 31, glutamate 34, glutamate 37, and glutamate 41. Residue glutamate 16 participates in Mg(2+) binding. Cysteine 19 and cysteine 24 are disulfide-bonded. A Mg(2+)-binding site is contributed by glutamate 21. Residue glutamate 27 participates in Mg(2+) binding. Glutamate 31 provides a ligand contact to Mg(2+). Residues glutamate 37, glutamate 41, aspartate 48, glycine 49, and glutamine 51 each contribute to the Ca(2+) site. Glutamate 37 and glutamate 41 together coordinate Mg(2+). Residues 48 to 84 enclose the EGF-like 1; calcium-binding domain; sequence DGDQCEPNPCLNGGLCKDDINSYECWCQVGFEGKNCE. 10 disulfides stabilise this stretch: cysteine 52-cysteine 63, cysteine 57-cysteine 72, cysteine 74-cysteine 83, cysteine 89-cysteine 100, cysteine 96-cysteine 110, cysteine 112-cysteine 125, cysteine 133-cysteine 291, cysteine 208-cysteine 224, cysteine 338-cysteine 352, and cysteine 363-cysteine 391. Ca(2+) contacts are provided by aspartate 65 and aspartate 66. Position 65 is a (3R)-3-hydroxyaspartate (aspartate 65). At serine 69 the chain carries Phosphoserine. One can recognise an EGF-like 2 domain in the interval 85 to 126; that stretch reads LDATCNIKNGRCKQFCKTGADSKVLCSCTTGYRLAPDQKSCK. The propeptide at 148–182 is activation peptide; sequence AEIIFSNMDYENSTEVEPILDSLTESNQSSDDFIR. Tyrosine 157 is modified (sulfotyrosine). Position 160 is a phosphoserine (serine 160). A Phosphothreonine; alternate modification is found at threonine 161. O-linked (GalNAc...) threonine; alternate glycosylation is present at threonine 161. O-linked (GalNAc...) threonine glycosylation occurs at threonine 171. Asparagine 174 carries N-linked (GlcNAc...) asparagine glycosylation. The region spanning 183–409 is the Peptidase S1 domain; that stretch reads IVGGENAKPG…YTKVSRYVNW (227 aa). The active-site Charge relay system is histidine 223. Ca(2+) is bound by residues glutamate 237, asparagine 239, glutamate 242, glutamate 244, and glutamate 247. A glycan (N-linked (GlcNAc...) asparagine) is linked at asparagine 262. Residue aspartate 271 is the Charge relay system of the active site. Serine 367 functions as the Charge relay system in the catalytic mechanism.

It belongs to the peptidase S1 family. As to quaternary structure, heterodimer of a light chain and a heavy chain; disulfide-linked. Interacts (inactive and activated) with F11 (activated) in calcium-dependent manner. Interacts with SERPINC1. Post-translationally, activated by factor XIa, which excises the activation peptide. The propeptide can also be removed by snake venom protease. Activated by coagulation factor VIIa-tissue factor (F7-F3) complex in calcium-dependent manner. The iron and 2-oxoglutarate dependent 3-hydroxylation of aspartate and asparagine is (R) stereospecific within EGF domains.

The protein localises to the secreted. It carries out the reaction Selective cleavage of Arg-|-Ile bond in factor X to form factor Xa.. Its function is as follows. Factor IX is a vitamin K-dependent plasma protein that participates in the intrinsic pathway of blood coagulation by converting factor X to its active form in the presence of Ca(2+) ions, phospholipids, and factor VIIIa. The sequence is that of Coagulation factor IX (F9) from Sus scrofa (Pig).